Reading from the N-terminus, the 252-residue chain is Probable transcriptional regulatory protein Fnod_1106 (252 aa).

The protein belongs to the TACO1 family.

Its subcellular location is the cytoplasm. This chain is Probable transcriptional regulatory protein Fnod_1106, found in Fervidobacterium nodosum (strain ATCC 35602 / DSM 5306 / Rt17-B1).